A 1342-amino-acid polypeptide reads, in one-letter code: DNA-directed RNA polymerase subunit beta (1342 aa).

Belongs to the RNA polymerase beta chain family. In terms of assembly, the RNAP catalytic core consists of 2 alpha, 1 beta, 1 beta' and 1 omega subunit. When a sigma factor is associated with the core the holoenzyme is formed, which can initiate transcription.

It catalyses the reaction RNA(n) + a ribonucleoside 5'-triphosphate = RNA(n+1) + diphosphate. DNA-dependent RNA polymerase catalyzes the transcription of DNA into RNA using the four ribonucleoside triphosphates as substrates. The chain is DNA-directed RNA polymerase subunit beta from Actinobacillus pleuropneumoniae serotype 5b (strain L20).